The following is a 1201-amino-acid chain: ATPase with bromodomain protein abo2 (1201 aa).

Disordered stretches follow at residues 1–223 (MRRR…MRGP) and 305–324 (CDSD…TSDV). The span at 13–24 (DDNEDNEEDDDY) shows a compositional bias: acidic residues. Over residues 29-38 (HSEKSEDHSN) the composition is skewed to basic and acidic residues. Polar residues predominate over residues 66–89 (FSSLQKHLNTETPSFSVSIENPSK). Over residues 129–146 (TDNNEDESTTFKDEEDDL) the composition is skewed to acidic residues. The segment covering 212-221 (RRGRRKRKMR) has biased composition (basic residues). Residues 312–323 (ELSSTSSEQTSD) show a composition bias toward low complexity. 413–420 (GPPGTGKT) is an ATP binding site. Residues 897–1026 (KIKNKIQVKL…AHAELNVDEL (130 aa)) enclose the Bromo domain.

This sequence belongs to the AAA ATPase family.

The protein resides in the nucleus. It carries out the reaction ATP + H2O = ADP + phosphate + H(+). In terms of biological role, probable ATPase which may play a role in nucleosome organization. The sequence is that of ATPase with bromodomain protein abo2 from Schizosaccharomyces pombe (strain 972 / ATCC 24843) (Fission yeast).